The sequence spans 148 residues: uncharacterized protein (148 aa).

This is an uncharacterized protein from Archaeoglobus fulgidus (strain ATCC 49558 / DSM 4304 / JCM 9628 / NBRC 100126 / VC-16).